The following is a 248-amino-acid chain: Triosephosphate isomerase (248 aa).

Residues asparagine 12 and lysine 14 each coordinate substrate. An igE-binding region spans residues 16–30 (NGDRAGIDSIISFMK). The active-site Electrophile is histidine 95. The active-site Proton acceptor is the glutamate 165. 2 igE-binding regions span residues 166-180 (PVWA…TPEQ) and 205-219 (RIIY…NCKE).

It belongs to the triosephosphate isomerase family. In terms of assembly, homodimer. As to expression, expressed in skeletal muscle (at protein level).

The protein resides in the cytoplasm. It catalyses the reaction D-glyceraldehyde 3-phosphate = dihydroxyacetone phosphate. It carries out the reaction dihydroxyacetone phosphate = methylglyoxal + phosphate. It functions in the pathway carbohydrate biosynthesis; gluconeogenesis. Its pathway is carbohydrate degradation; glycolysis; D-glyceraldehyde 3-phosphate from glycerone phosphate: step 1/1. Its function is as follows. Triosephosphate isomerase is an extremely efficient metabolic enzyme that catalyzes the interconversion between dihydroxyacetone phosphate (DHAP) and D-glyceraldehyde-3-phosphate (G3P) in glycolysis and gluconeogenesis. It is also responsible for the non-negligible production of methylglyoxal a reactive cytotoxic side-product that modifies and can alter proteins, DNA and lipids. This chain is Triosephosphate isomerase, found in Procambarus clarkii (Red swamp crayfish).